The chain runs to 98 residues: NADH-ubiquinone oxidoreductase chain 4L (98 aa).

The next 3 helical transmembrane spans lie at 1–21 (MTPLNINLTMAFFLALAGVLI), 28–48 (STLLCLEGMMLSLFILLSLLI), and 59–79 (APLILLVFSACEAGVGLALLV).

This sequence belongs to the complex I subunit 4L family. In terms of assembly, core subunit of respiratory chain NADH dehydrogenase (Complex I) which is composed of 45 different subunits.

The protein resides in the mitochondrion inner membrane. It carries out the reaction a ubiquinone + NADH + 5 H(+)(in) = a ubiquinol + NAD(+) + 4 H(+)(out). Core subunit of the mitochondrial membrane respiratory chain NADH dehydrogenase (Complex I) which catalyzes electron transfer from NADH through the respiratory chain, using ubiquinone as an electron acceptor. Part of the enzyme membrane arm which is embedded in the lipid bilayer and involved in proton translocation. This Tarsipes rostratus (Honey possum) protein is NADH-ubiquinone oxidoreductase chain 4L (MT-ND4L).